We begin with the raw amino-acid sequence, 394 residues long: Protein-glutamate methylesterase/protein-glutamine glutaminase (394 aa).

Residues 1-24 (MSDGFGRPPPPAPAGHPTGAAGGD) form a disordered region. The segment covering 15-24 (GHPTGAAGGD) has biased composition (low complexity). The region spanning 27–145 (RVMVVDDSAV…EIGGADAFKR (119 aa)) is the Response regulatory domain. Asp78 bears the 4-aspartylphosphate mark. Residues 191–393 (PAPAVGSVGQ…PYIRKFASRA (203 aa)) enclose the CheB-type methylesterase domain. Catalysis depends on residues Ser211, His238, and Asp335.

It belongs to the CheB family. Post-translationally, phosphorylated by CheA. Phosphorylation of the N-terminal regulatory domain activates the methylesterase activity.

Its subcellular location is the cytoplasm. It carries out the reaction [protein]-L-glutamate 5-O-methyl ester + H2O = L-glutamyl-[protein] + methanol + H(+). The catalysed reaction is L-glutaminyl-[protein] + H2O = L-glutamyl-[protein] + NH4(+). Its function is as follows. Involved in chemotaxis. Part of a chemotaxis signal transduction system that modulates chemotaxis in response to various stimuli. Catalyzes the demethylation of specific methylglutamate residues introduced into the chemoreceptors (methyl-accepting chemotaxis proteins or MCP) by CheR. Also mediates the irreversible deamidation of specific glutamine residues to glutamic acid. The protein is Protein-glutamate methylesterase/protein-glutamine glutaminase of Azospirillum brasilense.